Here is a 658-residue protein sequence, read N- to C-terminus: tRNA 5-methylaminomethyl-2-thiouridine biosynthesis bifunctional protein MnmC (658 aa).

The tRNA (mnm(5)s(2)U34)-methyltransferase stretch occupies residues 1-236; it reads MIPELPHAQL…KWEVLRGEFL (236 aa). Residues 265-658 are FAD-dependent cmnm(5)s(2)U34 oxidoreductase; sequence IGGGLAGCAS…ALRRLIRGKA (394 aa).

It in the N-terminal section; belongs to the methyltransferase superfamily. tRNA (mnm(5)s(2)U34)-methyltransferase family. This sequence in the C-terminal section; belongs to the DAO family. The cofactor is FAD.

The protein resides in the cytoplasm. The enzyme catalyses 5-aminomethyl-2-thiouridine(34) in tRNA + S-adenosyl-L-methionine = 5-methylaminomethyl-2-thiouridine(34) in tRNA + S-adenosyl-L-homocysteine + H(+). Catalyzes the last two steps in the biosynthesis of 5-methylaminomethyl-2-thiouridine (mnm(5)s(2)U) at the wobble position (U34) in tRNA. Catalyzes the FAD-dependent demodification of cmnm(5)s(2)U34 to nm(5)s(2)U34, followed by the transfer of a methyl group from S-adenosyl-L-methionine to nm(5)s(2)U34, to form mnm(5)s(2)U34. In Pseudomonas fluorescens (strain ATCC BAA-477 / NRRL B-23932 / Pf-5), this protein is tRNA 5-methylaminomethyl-2-thiouridine biosynthesis bifunctional protein MnmC.